The sequence spans 132 residues: Movement protein TGB3 (132 aa).

Over Met1–Asn11 the chain is Cytoplasmic. The chain crosses the membrane as a helical span at residues Ile12 to Ser32. The Lumenal portion of the chain corresponds to Asn33–Arg109. A helical membrane pass occupies residues Leu110 to Cys130. At His131 to Arg132 the chain is on the cytoplasmic side.

It belongs to the benyvirus TGB3 movement protein family. As to quaternary structure, interacts with movement proteins TGB1 and TGB2.

It is found in the host cell junction. The protein localises to the host plasmodesma. It localises to the host endoplasmic reticulum membrane. In terms of biological role, participates in the transport of viral RNA to the plasmodesmata. TGBp3 most probably contains signals of plasmodesmata targeting is therefore involved in the targeting of TGBp2, and viral RNAs-TGBp1 (RNP complex), to plasmodesmata. Can gate plasmodesmata and increase their size exclusion limit. The protein is Movement protein TGB3 of Beta macrocarpa (Beet).